Here is a 91-residue protein sequence, read N- to C-terminus: Mercuric transport protein periplasmic component (91 aa).

The signal sequence occupies residues 1 to 19 (MKKLFASLALAAAVAPVWA). Residues 22 to 88 (QTVTLAVPGM…ATADAGYPSS (67 aa)) enclose the HMA domain. Hg(2+) contacts are provided by Cys33 and Cys36.

It belongs to the MerP family. In terms of assembly, monomer.

It is found in the periplasm. Involved in mercury resistance. Acts as a mercury scavenger that specifically binds to a mercuric ion in the periplasm and probably passes it to the cytoplasmic mercuric reductase MerA via the mercuric transport protein MerT. In Shigella flexneri, this protein is Mercuric transport protein periplasmic component.